The following is a 408-amino-acid chain: Multidrug resistance protein MdtG (408 aa).

A run of 11 helical transmembrane segments spans residues 16–36 (LIVAWLGCFLTGAAFSLVMPF), 58–78 (IVFSITFLFSSIASPFWGGLA), 92–112 (LGMGIVMVLMGLAQNIWQFLI), 115–135 (ALLGLLGGFVPNANALIATQV), 146–166 (TLSTGGVSGALLGPMAGGLLA), 173–193 (PVFFITASVLILCFFVTLFCI), 224–244 (LFVTTLIIQVATGSIAPILTL), 256–276 (VAFISGMIASVPGVAALLSAP), 290–310 (ILITALIFSVLLLIPMSYVQT), 319–339 (FLLGAADGALLPAVQTLLVYN), and 378–398 (AVFLVTAGVVLFNAVYSWNSL).

Belongs to the major facilitator superfamily. DHA1 family. MdtG (TC 2.A.1.2.20) subfamily.

It is found in the cell inner membrane. In terms of biological role, confers resistance to fosfomycin and deoxycholate. The protein is Multidrug resistance protein MdtG of Escherichia coli (strain 55989 / EAEC).